The chain runs to 547 residues: ATP synthase subunit beta, mitochondrial (547 aa).

The N-terminal 45 residues, 1-45 (MASRRLLSSFLRSSTRRSLRPSFSNPRPSFLTSYCSSPASILRRY), are a transit peptide targeting the mitochondrion. Low complexity predominate over residues 52–62 (KEPAASKPAGT). Residues 52-74 (KEPAASKPAGTAGTGKGTITDEK) form a disordered region. Residue 226–233 (GGDWVGKT) coordinates ATP.

It belongs to the ATPase alpha/beta chains family. In terms of assembly, F-type ATPases have 2 components, CF(1) - the catalytic core - and CF(0) - the membrane proton channel. CF(1) has five subunits: alpha(3), beta(3), gamma(1), delta(1), epsilon(1). CF(0) has three main subunits: a, b and c.

Its subcellular location is the mitochondrion. The protein resides in the mitochondrion inner membrane. The enzyme catalyses ATP + H2O + 4 H(+)(in) = ADP + phosphate + 5 H(+)(out). Functionally, mitochondrial membrane ATP synthase (F(1)F(0) ATP synthase or Complex V) produces ATP from ADP in the presence of a proton gradient across the membrane which is generated by electron transport complexes of the respiratory chain. F-type ATPases consist of two structural domains, F(1) - containing the extramembraneous catalytic core, and F(0) - containing the membrane proton channel, linked together by a central stalk and a peripheral stalk. During catalysis, ATP synthesis in the catalytic domain of F(1) is coupled via a rotary mechanism of the central stalk subunits to proton translocation. Subunits alpha and beta form the catalytic core in F(1). Rotation of the central stalk against the surrounding alpha(3)beta(3) subunits leads to hydrolysis of ATP in three separate catalytic sites on the beta subunits. The sequence is that of ATP synthase subunit beta, mitochondrial (ATPB) from Daucus carota (Wild carrot).